The primary structure comprises 239 residues: Putative transcriptional regulator of 2-aminoethylphosphonate degradation operons (239 aa).

The HTH gntR-type domain maps to 8 to 76 (IPQYLLIKAQ…DRRGWFVTPE (69 aa)). The H-T-H motif DNA-binding region spans 36 to 55 (ERELCAIFNTTRITIRESLA).

In Salmonella typhi, this protein is Putative transcriptional regulator of 2-aminoethylphosphonate degradation operons (phnR).